Here is a 775-residue protein sequence, read N- to C-terminus: Suppressor of glycerol defect protein 1 (775 aa).

Basic residues-rich tracts occupy residues 1 to 11 (MRPIKKSRSLK) and 28 to 49 (RRGKRNHNLPHREKRKFARISR). Disordered regions lie at residues 1 to 101 (MRPI…LLDP) and 152 to 253 (IDDI…GGDK). Composition is skewed to basic and acidic residues over residues 52-79 (NGYENRKITEEGDSKSSELNDDYLDAHR), 177-193 (TGDHGSVDELESEREGN), and 209-223 (DEFHQPETKPIRMDP). An MIF4G domain is found at 262–463 (RRKLQGSLNK…ESITNLKENK (202 aa)). One can recognise an MI domain in the interval 565–689 (TLRTSIFVAL…PLTILKHVDF (125 aa)).

Belongs to the CWC22 family.

It is found in the nucleus. The protein resides in the nucleolus. Functionally, involved in osmoregulatory glycerol response. This is Suppressor of glycerol defect protein 1 (sgd1) from Schizosaccharomyces pombe (strain 972 / ATCC 24843) (Fission yeast).